A 351-amino-acid polypeptide reads, in one-letter code: Adenine deaminase (351 aa).

Residues His20, His22, and His200 each coordinate Zn(2+). Glu203 (proton donor) is an active-site residue. Asp281 contributes to the Zn(2+) binding site. Asp282 serves as a coordination point for substrate.

This sequence belongs to the metallo-dependent hydrolases superfamily. Adenosine and AMP deaminases family. Adenine deaminase type 2 subfamily. Zn(2+) is required as a cofactor.

The catalysed reaction is adenine + H2O + H(+) = hypoxanthine + NH4(+). In terms of biological role, catalyzes the hydrolytic deamination of adenine to hypoxanthine. Plays an important role in the purine salvage pathway and in nitrogen catabolism. The polypeptide is Adenine deaminase (Cupriavidus necator (strain ATCC 17699 / DSM 428 / KCTC 22496 / NCIMB 10442 / H16 / Stanier 337) (Ralstonia eutropha)).